A 284-amino-acid chain; its full sequence is Cytochrome P450 2C31 (284 aa).

Cys-229 serves as a coordination point for heme.

This sequence belongs to the cytochrome P450 family. The cofactor is heme.

It is found in the endoplasmic reticulum membrane. The protein resides in the microsome membrane. The catalysed reaction is an organic molecule + reduced [NADPH--hemoprotein reductase] + O2 = an alcohol + oxidized [NADPH--hemoprotein reductase] + H2O + H(+). Its function is as follows. Cytochromes P450 are a group of heme-thiolate monooxygenases. In liver microsomes, this enzyme is involved in an NADPH-dependent electron transport pathway. It oxidizes a variety of structurally unrelated compounds, including steroids, fatty acids, and xenobiotics. This chain is Cytochrome P450 2C31 (CYP2C31), found in Capra hircus aegagrus (Wild goat).